The sequence spans 677 residues: Probable potassium transport system protein Kup (677 aa).

Helical transmembrane passes span 13 to 33 (GALI…LYTM), 54 to 74 (VSLV…IIAL), 98 to 118 (WLLL…TLTP), 137 to 157 (FIFP…LLIV), 171 to 191 (IFGP…LVNI), 217 to 237 (TGIF…ALYS), 249 to 269 (VSWI…GAWI), 296 to 316 (IFGV…LISG), 345 to 365 (MYIG…VWAF), 374 to 394 (AYGL…YQFI), 402 to 422 (ILAF…LIAS), and 429 to 449 (GGYA…IWFY).

Belongs to the HAK/KUP transporter (TC 2.A.72) family.

It is found in the cell membrane. The enzyme catalyses K(+)(in) + H(+)(in) = K(+)(out) + H(+)(out). Functionally, transport of potassium into the cell. Likely operates as a K(+):H(+) symporter. The chain is Probable potassium transport system protein Kup from Leuconostoc mesenteroides subsp. mesenteroides (strain ATCC 8293 / DSM 20343 / BCRC 11652 / CCM 1803 / JCM 6124 / NCDO 523 / NBRC 100496 / NCIMB 8023 / NCTC 12954 / NRRL B-1118 / 37Y).